The primary structure comprises 100 residues: Urease subunit gamma (100 aa).

This sequence belongs to the urease gamma subunit family. In terms of assembly, heterotrimer of UreA (gamma), UreB (beta) and UreC (alpha) subunits. Three heterotrimers associate to form the active enzyme.

Its subcellular location is the cytoplasm. The enzyme catalyses urea + 2 H2O + H(+) = hydrogencarbonate + 2 NH4(+). It functions in the pathway nitrogen metabolism; urea degradation; CO(2) and NH(3) from urea (urease route): step 1/1. The polypeptide is Urease subunit gamma (Polaromonas naphthalenivorans (strain CJ2)).